The chain runs to 322 residues: 26S proteasome non-ATPase regulatory subunit 7 (322 aa).

In terms of domain architecture, MPN spans 9-144 (VVVHPLVLLS…TEAYISVEEV (136 aa)). A Glycyl lysine isopeptide (Lys-Gly) (interchain with G-Cter in ubiquitin) cross-link involves residue lysine 180. 4 positions are modified to N6-acetyllysine: lysine 204, lysine 214, lysine 314, and lysine 315. Residues 281 to 322 (ANRDAEKKEGQEKEDSKKDRKDDKEKEKEKSDVKKEEKKEKK) are disordered.

It belongs to the peptidase M67A family. In terms of assembly, component of the 19S proteasome regulatory particle complex. The 26S proteasome consists of a 20S core particle (CP) and two 19S regulatory subunits (RP). The regulatory particle is made of a lid composed of 9 subunits including PSMD7, a base containing 6 ATPases and few additional components. Within the complex, PSMD7 interacts with subunit PSMD4 through their respective MPN domain. Interacts with TRIM5.

Its function is as follows. Component of the 26S proteasome, a multiprotein complex involved in the ATP-dependent degradation of ubiquitinated proteins. This complex plays a key role in the maintenance of protein homeostasis by removing misfolded or damaged proteins, which could impair cellular functions, and by removing proteins whose functions are no longer required. Therefore, the proteasome participates in numerous cellular processes, including cell cycle progression, apoptosis, or DNA damage repair. The protein is 26S proteasome non-ATPase regulatory subunit 7 (PSMD7) of Bos taurus (Bovine).